The chain runs to 266 residues: Thiazole synthase (266 aa).

Lysine 95 functions as the Schiff-base intermediate with DXP in the catalytic mechanism. Residues glycine 156, 182–183, and 204–205 each bind 1-deoxy-D-xylulose 5-phosphate; these read AG and NT.

Belongs to the ThiG family. In terms of assembly, homotetramer. Forms heterodimers with either ThiH or ThiS.

The protein localises to the cytoplasm. The catalysed reaction is [ThiS sulfur-carrier protein]-C-terminal-Gly-aminoethanethioate + 2-iminoacetate + 1-deoxy-D-xylulose 5-phosphate = [ThiS sulfur-carrier protein]-C-terminal Gly-Gly + 2-[(2R,5Z)-2-carboxy-4-methylthiazol-5(2H)-ylidene]ethyl phosphate + 2 H2O + H(+). It participates in cofactor biosynthesis; thiamine diphosphate biosynthesis. In terms of biological role, catalyzes the rearrangement of 1-deoxy-D-xylulose 5-phosphate (DXP) to produce the thiazole phosphate moiety of thiamine. Sulfur is provided by the thiocarboxylate moiety of the carrier protein ThiS. In vitro, sulfur can be provided by H(2)S. This Shewanella denitrificans (strain OS217 / ATCC BAA-1090 / DSM 15013) protein is Thiazole synthase.